Consider the following 310-residue polypeptide: Cytochrome f (310 aa).

The first 27 residues, 1–27, serve as a signal peptide directing secretion; that stretch reads MRRLLSPLFAALIVGVTVLTAPSTSWA. Heme is bound by residues Tyr28, Cys48, Cys51, and His52. A helical transmembrane segment spans residues 277-297; that stretch reads IYGLLAFFAAVALAQIMLVLK.

It belongs to the cytochrome f family. As to quaternary structure, the 4 large subunits of the cytochrome b6-f complex are cytochrome b6, subunit IV (17 kDa polypeptide, PetD), cytochrome f and the Rieske protein, while the 4 small subunits are PetG, PetL, PetM and PetN. The complex functions as a dimer. Heme serves as cofactor.

The protein localises to the cellular thylakoid membrane. Functionally, component of the cytochrome b6-f complex, which mediates electron transfer between photosystem II (PSII) and photosystem I (PSI), cyclic electron flow around PSI, and state transitions. This Synechococcus sp. (strain WH7803) protein is Cytochrome f.